The following is a 351-amino-acid chain: Molybdenum import ATP-binding protein ModC (351 aa).

In terms of domain architecture, ABC transporter spans 1 to 229 (MLQINVKKQL…PIFAPWKGES (229 aa)). 31–38 (GLSGSGKT) contacts ATP. The Mop domain maps to 289 to 351 (QTSIRNILRG…YVQIKAVSVM (63 aa)).

The protein belongs to the ABC transporter superfamily. Molybdate importer (TC 3.A.1.8) family. The complex is composed of two ATP-binding proteins (ModC), two transmembrane proteins (ModB) and a solute-binding protein (ModA).

The protein resides in the cell inner membrane. It carries out the reaction molybdate(out) + ATP + H2O = molybdate(in) + ADP + phosphate + H(+). Its function is as follows. Part of the ABC transporter complex ModABC involved in molybdenum import. Responsible for energy coupling to the transport system. The polypeptide is Molybdenum import ATP-binding protein ModC (Haemophilus influenzae (strain ATCC 51907 / DSM 11121 / KW20 / Rd)).